Consider the following 199-residue polypeptide: Superoxide dismutase [Mn/Fe] 2 (199 aa).

Fe(3+) is bound by residues His-27, His-81, Asp-161, and His-165. 4 residues coordinate Mn(2+): His-27, His-81, Asp-161, and His-165.

It belongs to the iron/manganese superoxide dismutase family. In terms of assembly, homodimer. Can also form a heterodimer with SodA. It depends on Mn(2+) as a cofactor. The cofactor is Fe(3+).

The catalysed reaction is 2 superoxide + 2 H(+) = H2O2 + O2. Its function is as follows. Destroys superoxide anion radicals which are normally produced within the cells and which are toxic to biological systems. Catalyzes the dismutation of superoxide anion radicals into O2 and H2O2 by successive reduction and oxidation of the transition metal ion at the active site. In Staphylococcus aureus (strain bovine RF122 / ET3-1), this protein is Superoxide dismutase [Mn/Fe] 2 (sodM).